Consider the following 194-residue polypeptide: Extracellular globin-E1 (194 aa).

2 Globin domains span residues 1–45 (DISH…MGLS) and 55–194 (GLSG…LRQA). Position 150 (histidine 150) interacts with heme b.

Belongs to the globin family. As to quaternary structure, artemia hemoglobin is a dimer of two similar sized subunits. Each subunit represents a globin chain which exists in two forms (alpha and beta), thus making possible three different phenotypes (HB1, alpha(2), HB2, alpha/beta, HB3, beta(2)). The globin chain is a polymer of eight heme-binding covalently linked domains.

The chain is Extracellular globin-E1 from Artemia sp. (Brine shrimp).